The following is a 426-amino-acid chain: MSVSANAAQAHAQPSAVLRPVMILAGGTGGHIFPGLAVAKVLRARGVPVTWLGADGAMETRLVPQHDIPIDTLAISGLRGKGVVKLLGAPVRVMRAVRAAGFVLRKRQPRAVISFGGFAAGPGGLAARLLGAPLLVHEQNRAPGMTNKVLSRFARRVLTGFPGSFVGEEAVGNPVRAEIAALPAPADRLFGRTGPVRVLVLGGSQGARVLNQALPAALVALGHSEVEVRHQCGEKLRAEAEAAYAQAGVNASVEPFIADMAAAYAWADLVVCRAGASTLAELCAAGVGSVLVPFAAAVDDHQTRNAEYLVGANAAVLLKQDDSLPVRLQQVLQTLLADPARRLSMANAARTLAKPDAAERIADIILQEAGNGPSGMGNGHSSEQPQERTLMHADKRTDQVSVAAGAQLHTIPDSRFPIRTSTGGAR.

UDP-N-acetyl-alpha-D-glucosamine is bound by residues 28-30, Asn140, Arg176, Ser204, Ile257, and Gln302; that span reads TGG. The disordered stretch occupies residues 369-388; it reads AGNGPSGMGNGHSSEQPQER.

It belongs to the glycosyltransferase 28 family. MurG subfamily.

The protein localises to the cell inner membrane. It carries out the reaction di-trans,octa-cis-undecaprenyl diphospho-N-acetyl-alpha-D-muramoyl-L-alanyl-D-glutamyl-meso-2,6-diaminopimeloyl-D-alanyl-D-alanine + UDP-N-acetyl-alpha-D-glucosamine = di-trans,octa-cis-undecaprenyl diphospho-[N-acetyl-alpha-D-glucosaminyl-(1-&gt;4)]-N-acetyl-alpha-D-muramoyl-L-alanyl-D-glutamyl-meso-2,6-diaminopimeloyl-D-alanyl-D-alanine + UDP + H(+). Its pathway is cell wall biogenesis; peptidoglycan biosynthesis. Functionally, cell wall formation. Catalyzes the transfer of a GlcNAc subunit on undecaprenyl-pyrophosphoryl-MurNAc-pentapeptide (lipid intermediate I) to form undecaprenyl-pyrophosphoryl-MurNAc-(pentapeptide)GlcNAc (lipid intermediate II). The protein is UDP-N-acetylglucosamine--N-acetylmuramyl-(pentapeptide) pyrophosphoryl-undecaprenol N-acetylglucosamine transferase of Xanthomonas axonopodis pv. citri (strain 306).